The chain runs to 494 residues: Guanosine-5'-triphosphate,3'-diphosphate pyrophosphatase (494 aa).

This sequence belongs to the GppA/Ppx family. GppA subfamily.

The catalysed reaction is guanosine 3'-diphosphate 5'-triphosphate + H2O = guanosine 3',5'-bis(diphosphate) + phosphate + H(+). It participates in purine metabolism; ppGpp biosynthesis; ppGpp from GTP: step 2/2. Its function is as follows. Catalyzes the conversion of pppGpp to ppGpp. Guanosine pentaphosphate (pppGpp) is a cytoplasmic signaling molecule which together with ppGpp controls the 'stringent response', an adaptive process that allows bacteria to respond to amino acid starvation, resulting in the coordinated regulation of numerous cellular activities. In Escherichia coli O6:H1 (strain CFT073 / ATCC 700928 / UPEC), this protein is Guanosine-5'-triphosphate,3'-diphosphate pyrophosphatase.